Reading from the N-terminus, the 166-residue chain is 2-C-methyl-D-erythritol 2,4-cyclodiphosphate synthase (166 aa).

A divalent metal cation is bound by residues D17 and H19. 4-CDP-2-C-methyl-D-erythritol 2-phosphate-binding positions include 17–19 (DSH) and 43–44 (HS). A divalent metal cation is bound at residue H51. 4-CDP-2-C-methyl-D-erythritol 2-phosphate contacts are provided by residues 65 to 67 (DIG), 109 to 115 (AQKPKMA), and R151.

It belongs to the IspF family. As to quaternary structure, homotrimer. Requires a divalent metal cation as cofactor.

The enzyme catalyses 4-CDP-2-C-methyl-D-erythritol 2-phosphate = 2-C-methyl-D-erythritol 2,4-cyclic diphosphate + CMP. Its pathway is isoprenoid biosynthesis; isopentenyl diphosphate biosynthesis via DXP pathway; isopentenyl diphosphate from 1-deoxy-D-xylulose 5-phosphate: step 4/6. In terms of biological role, involved in the biosynthesis of isopentenyl diphosphate (IPP) and dimethylallyl diphosphate (DMAPP), two major building blocks of isoprenoid compounds. Catalyzes the conversion of 4-diphosphocytidyl-2-C-methyl-D-erythritol 2-phosphate (CDP-ME2P) to 2-C-methyl-D-erythritol 2,4-cyclodiphosphate (ME-CPP) with a corresponding release of cytidine 5-monophosphate (CMP). The polypeptide is 2-C-methyl-D-erythritol 2,4-cyclodiphosphate synthase (Rhodopirellula baltica (strain DSM 10527 / NCIMB 13988 / SH1)).